The following is a 297-amino-acid chain: Nitrogenase iron protein (297 aa).

11–18 (GKGGIGKS) is an ATP binding site. Cys-99 is a binding site for [4Fe-4S] cluster. An ADP-ribosylarginine; by dinitrogenase reductase ADP-ribosyltransferase modification is found at Arg-102. Cys-133 is a binding site for [4Fe-4S] cluster.

It belongs to the NifH/BchL/ChlL family. As to quaternary structure, homodimer. It depends on [4Fe-4S] cluster as a cofactor. The reversible ADP-ribosylation of Arg-102 inactivates the nitrogenase reductase and regulates nitrogenase activity.

It carries out the reaction N2 + 8 reduced [2Fe-2S]-[ferredoxin] + 16 ATP + 16 H2O = H2 + 8 oxidized [2Fe-2S]-[ferredoxin] + 2 NH4(+) + 16 ADP + 16 phosphate + 6 H(+). The key enzymatic reactions in nitrogen fixation are catalyzed by the nitrogenase complex, which has 2 components: the iron protein and the molybdenum-iron protein. The sequence is that of Nitrogenase iron protein (nifH) from Rhizobium etli.